The primary structure comprises 325 residues: uncharacterized protein (325 aa).

In terms of domain architecture, HD spans 49-151 (RYEHSIGVML…ELCADRTDYT (103 aa)).

This is an uncharacterized protein from Bacillus subtilis (strain 168).